Consider the following 155-residue polypeptide: 6,7-dimethyl-8-ribityllumazine synthase (155 aa).

5-amino-6-(D-ribitylamino)uracil-binding positions include Phe18, Ala49 to Glu51, and Cys75 to Ile77. Glu80–Thr81 provides a ligand contact to (2S)-2-hydroxy-3-oxobutyl phosphate. The active-site Proton donor is His83. 5-amino-6-(D-ribitylamino)uracil is bound at residue Asn108. Arg122 lines the (2S)-2-hydroxy-3-oxobutyl phosphate pocket.

The protein belongs to the DMRL synthase family.

It catalyses the reaction (2S)-2-hydroxy-3-oxobutyl phosphate + 5-amino-6-(D-ribitylamino)uracil = 6,7-dimethyl-8-(1-D-ribityl)lumazine + phosphate + 2 H2O + H(+). It participates in cofactor biosynthesis; riboflavin biosynthesis; riboflavin from 2-hydroxy-3-oxobutyl phosphate and 5-amino-6-(D-ribitylamino)uracil: step 1/2. In terms of biological role, catalyzes the formation of 6,7-dimethyl-8-ribityllumazine by condensation of 5-amino-6-(D-ribitylamino)uracil with 3,4-dihydroxy-2-butanone 4-phosphate. This is the penultimate step in the biosynthesis of riboflavin. This chain is 6,7-dimethyl-8-ribityllumazine synthase, found in Bartonella henselae (strain ATCC 49882 / DSM 28221 / CCUG 30454 / Houston 1) (Rochalimaea henselae).